Reading from the N-terminus, the 1224-residue chain is Protein MSN5 (1224 aa).

The disordered stretch occupies residues 1200–1224 (NKENGDMLDDPNIEDGAVGNLFDDN).

In terms of assembly, interacts with CEX1.

The polypeptide is Protein MSN5 (MSN5) (Saccharomyces cerevisiae (strain ATCC 204508 / S288c) (Baker's yeast)).